Here is a 329-residue protein sequence, read N- to C-terminus: tRNA N6-adenosine threonylcarbamoyltransferase (329 aa).

The Fe cation site is built by His110 and His114. Residues Val132–Gly136, Asp165, Gly178, and Asn271 each bind substrate. A Fe cation-binding site is contributed by Asp299.

The protein belongs to the KAE1 / TsaD family. The cofactor is Fe(2+).

The protein localises to the cytoplasm. The catalysed reaction is L-threonylcarbamoyladenylate + adenosine(37) in tRNA = N(6)-L-threonylcarbamoyladenosine(37) in tRNA + AMP + H(+). Required for the formation of a threonylcarbamoyl group on adenosine at position 37 (t(6)A37) in tRNAs that read codons beginning with adenine. Is involved in the transfer of the threonylcarbamoyl moiety of threonylcarbamoyl-AMP (TC-AMP) to the N6 group of A37, together with TsaE and TsaB. TsaD likely plays a direct catalytic role in this reaction. This Neorickettsia sennetsu (strain ATCC VR-367 / Miyayama) (Ehrlichia sennetsu) protein is tRNA N6-adenosine threonylcarbamoyltransferase.